The chain runs to 237 residues: MKRPIIIALDFPTAERALAFLDQFPADLHVTVKIGMELFYAAGPSIVTDVQARGHAVFLDLKLHDIPNTVESAMRVIGRLGVTYTTVHAAGGHVMLSAAKRGLVAGAMAAGVTAPKLLAITQLTSTNQAILNQDQQIMGTVRASVVHYAKLARASDCDGVICSAQEVQAIHTAVGADFLGITPGIRPASAQSDDQQRVMTPAAAAKAGSNGLVIGRPITQAAEPVQAYRDIMTEWSN.

Substrate-binding positions include Asp10, Lys33, 60–69 (DLKLHDIPNT), Thr124, Arg186, Gln195, Gly215, and Arg216. Lys62 serves as the catalytic Proton donor.

Belongs to the OMP decarboxylase family. Type 1 subfamily. In terms of assembly, homodimer.

It carries out the reaction orotidine 5'-phosphate + H(+) = UMP + CO2. The protein operates within pyrimidine metabolism; UMP biosynthesis via de novo pathway; UMP from orotate: step 2/2. Catalyzes the decarboxylation of orotidine 5'-monophosphate (OMP) to uridine 5'-monophosphate (UMP). This chain is Orotidine 5'-phosphate decarboxylase, found in Lactiplantibacillus plantarum (strain ATCC BAA-793 / NCIMB 8826 / WCFS1) (Lactobacillus plantarum).